Consider the following 360-residue polypeptide: 3-dehydroquinate synthase (360 aa).

NAD(+)-binding positions include 71–76 (DGEAHK), 105–109 (GVVGD), 129–130 (TT), K142, and K151. Zn(2+) contacts are provided by E184, H247, and H264.

Belongs to the sugar phosphate cyclases superfamily. Dehydroquinate synthase family. Requires Co(2+) as cofactor. It depends on Zn(2+) as a cofactor. NAD(+) serves as cofactor.

It is found in the cytoplasm. The enzyme catalyses 7-phospho-2-dehydro-3-deoxy-D-arabino-heptonate = 3-dehydroquinate + phosphate. It participates in metabolic intermediate biosynthesis; chorismate biosynthesis; chorismate from D-erythrose 4-phosphate and phosphoenolpyruvate: step 2/7. In terms of biological role, catalyzes the conversion of 3-deoxy-D-arabino-heptulosonate 7-phosphate (DAHP) to dehydroquinate (DHQ). The polypeptide is 3-dehydroquinate synthase (Azoarcus sp. (strain BH72)).